We begin with the raw amino-acid sequence, 215 residues long: Large ribosomal subunit protein uL1 (215 aa).

The protein belongs to the universal ribosomal protein uL1 family. Part of the 50S ribosomal subunit.

Binds directly to 23S rRNA. Probably involved in E site tRNA release. Functionally, protein L1 is also a translational repressor protein, it controls the translation of its operon by binding to its mRNA. The chain is Large ribosomal subunit protein uL1 from Cenarchaeum symbiosum (strain A).